The primary structure comprises 844 residues: Striatin-interacting proteins 2 (844 aa).

Low complexity predominate over residues 1 to 18 (MDDPAAPGPAGSPANDNG). Residues 1–58 (MDDPAAPGPAGSPANDNGNGNGNGNGNGNGGKGKPAVPKGRETFRNQRRESEGSVDCP) form a disordered region. Positions 19–33 (NGNGNGNGNGNGGKG) are enriched in gly residues. Basic and acidic residues predominate over residues 39-52 (KGRETFRNQRRESE). Phosphoserine is present on residues serine 328, serine 339, and serine 364. The segment at 331-355 (SYTLDLGESQLAPPPSKLRGRRGSR) is disordered. Residues 370–422 (ERDLFKTEEPATEEEEESAADGERTLDGELDLLEQDPLVPPPPSQTPLSTDRV) form a disordered region. The span at 379 to 389 (PATEEEEESAA) shows a compositional bias: acidic residues.

It belongs to the STRIP family. Part of the core of STRIPAK complexes composed of PP2A catalytic and scaffolding subunits, the striatins (PP2A regulatory subunits), the striatin-associated proteins MOB4, STRIP1 and STRIP2, PDCD10 and members of the STE20 kinases, such as STK24 and STK26. Interacts with CTTNBP2NL.

The protein resides in the cytoplasm. Plays a role in the regulation of cell morphology and cytoskeletal organization. Required in the control of cell shape. Calmodulin-binding scaffolding protein which is the center of the striatin-interacting phosphatase and kinase (STRIPAK) complexes. STRIPAK complexes have critical roles in protein (de)phosphorylation and are regulators of multiple signaling pathways including Hippo, MAPK, nuclear receptor and cytoskeleton remodeling. Different types of STRIPAK complexes are involved in a variety of biological processes such as cell growth, differentiation, apoptosis, metabolism and immune regulation. This is Striatin-interacting proteins 2 (Strip2) from Mus musculus (Mouse).